The sequence spans 293 residues: Movement protein BC1 (293 aa).

This sequence belongs to the begomovirus movement protein BC1 family. As to quaternary structure, binds to dimeric supercoiled plasmid DNA. In terms of processing, phosphorylated.

Its subcellular location is the host cell membrane. It is found in the host microsome membrane. It localises to the host endoplasmic reticulum membrane. Its function is as follows. Transports viral genome to neighboring plant cells directly through plasmosdesmata, without any budding. The movement protein allows efficient cell to cell propagation, by bypassing the host cell wall barrier. Begomovirus genome is shuttled out of nucleus by Nuclear shuttle protein (NSP) and the movement protein transports the DNA-NSP complex to cell plasmodesmata and facilitates further movement across the cell wall. The chain is Movement protein BC1 from Potato yellow mosaic virus (isolate Venezuela) (PYMV).